A 320-amino-acid polypeptide reads, in one-letter code: Malate dehydrogenase (320 aa).

Residues 10-15 (GSGMIG) and aspartate 34 each bind NAD(+). Substrate contacts are provided by arginine 83 and arginine 89. Residues asparagine 96 and 119-121 (ITN) contribute to the NAD(+) site. Residues asparagine 121 and arginine 152 each coordinate substrate. Histidine 176 (proton acceptor) is an active-site residue.

It belongs to the LDH/MDH superfamily. MDH type 3 family.

The enzyme catalyses (S)-malate + NAD(+) = oxaloacetate + NADH + H(+). Its function is as follows. Catalyzes the reversible oxidation of malate to oxaloacetate. The chain is Malate dehydrogenase from Brucella melitensis biotype 1 (strain ATCC 23456 / CCUG 17765 / NCTC 10094 / 16M).